The following is a 191-amino-acid chain: Ion-translocating oxidoreductase complex subunit B (191 aa).

Residues 1–26 (MSAVLIAVLALLALCLLGGAILGFAA) form a hydrophobic region. Residues 32–90 (EGDPIAEQINALLPQTQCGQCGYPGCKPYAEAIAGGDKINKCPPGGEATIQALADLLDV) enclose the 4Fe-4S domain. 12 residues coordinate [4Fe-4S] cluster: cysteine 49, cysteine 52, cysteine 57, cysteine 73, cysteine 114, cysteine 117, cysteine 120, cysteine 124, cysteine 144, cysteine 147, cysteine 150, and cysteine 154. 2 consecutive 4Fe-4S ferredoxin-type domains span residues 105-134 (MVAY…GAAR) and 135-164 (QMHT…MIEV).

Belongs to the 4Fe4S bacterial-type ferredoxin family. RnfB subfamily. The complex is composed of six subunits: RnfA, RnfB, RnfC, RnfD, RnfE and RnfG. The cofactor is [4Fe-4S] cluster.

It is found in the cell inner membrane. Its function is as follows. Part of a membrane-bound complex that couples electron transfer with translocation of ions across the membrane. The sequence is that of Ion-translocating oxidoreductase complex subunit B from Stutzerimonas stutzeri (strain A1501) (Pseudomonas stutzeri).